The chain runs to 163 residues: Putative pre-16S rRNA nuclease (163 aa).

Belongs to the YqgF nuclease family.

Its subcellular location is the cytoplasm. In terms of biological role, could be a nuclease involved in processing of the 5'-end of pre-16S rRNA. The sequence is that of Putative pre-16S rRNA nuclease from Zymomonas mobilis subsp. mobilis (strain ATCC 31821 / ZM4 / CP4).